A 1121-amino-acid polypeptide reads, in one-letter code: tRNA (34-2'-O)-methyltransferase regulator WDR6 (1121 aa).

At Met1 the chain carries N-acetylmethionine. WD repeat units lie at residues 53–97, 105–143, 147–189, 200–238, 247–285, 289–327, 335–376, 381–422, 425–470, 476–520, 559–598, 604–642, 645–684, 739–785, 848–893, 901–946, 970–1012, 1036–1073, and 1079–1121; these read IKRV…VVKI, WELW…LYDP, CILQ…VWYP, APDR…IWKV, RVQN…VWSH, ILQA…LWHL, LGVS…LYDV, WEQL…VVPI, PTAA…ISAA, IFVK…LFPS, PVST…FVRD, VLRQ…VWNP, HEKL…LYRA, LTDI…VWGI, RNRH…LFLL, QLLA…FWDL, GTPS…VFVL, EEYS…FWRL, and TFMN…NWYD.

This sequence belongs to the WD repeat WDR6 family. In terms of assembly, interacts with FTSJ1; the interaction is direct, and required for 2'-O-methylation of position 34 in substrate tRNAs. Interacts with IRS4. Interacts with STK11/LKB1. In terms of tissue distribution, ubiquitous.

The protein localises to the cytoplasm. Its function is as follows. Together with methyltransferase FTSJ1, methylates the 2'-O-ribose of nucleotides at position 34 of the tRNA anticodon loop of substrate tRNAs. Required for the correct positioning of the substrate tRNA for methylation. Required to suppress amino acid starvation-induced autophagy. Enhances the STK11/LKB1-induced cell growth suppression activity. This chain is tRNA (34-2'-O)-methyltransferase regulator WDR6 (WDR6), found in Homo sapiens (Human).